Reading from the N-terminus, the 188-residue chain is CMT1A duplicated region transcript 15 protein (188 aa).

Expressed in fetal heart, kidney, liver, lung and spleen.

In Homo sapiens (Human), this protein is CMT1A duplicated region transcript 15 protein (CDRT15).